The following is a 226-amino-acid chain: Deoxyribose-phosphate aldolase (226 aa).

Glutamate 96 acts as the Proton donor/acceptor in catalysis. The active-site Schiff-base intermediate with acetaldehyde is the lysine 157. Residue lysine 185 is the Proton donor/acceptor of the active site.

This sequence belongs to the DeoC/FbaB aldolase family. DeoC type 1 subfamily.

It localises to the cytoplasm. It catalyses the reaction 2-deoxy-D-ribose 5-phosphate = D-glyceraldehyde 3-phosphate + acetaldehyde. It participates in carbohydrate degradation; 2-deoxy-D-ribose 1-phosphate degradation; D-glyceraldehyde 3-phosphate and acetaldehyde from 2-deoxy-alpha-D-ribose 1-phosphate: step 2/2. Functionally, catalyzes a reversible aldol reaction between acetaldehyde and D-glyceraldehyde 3-phosphate to generate 2-deoxy-D-ribose 5-phosphate. In Gloeobacter violaceus (strain ATCC 29082 / PCC 7421), this protein is Deoxyribose-phosphate aldolase.